A 1067-amino-acid chain; its full sequence is TBC1 domain family member 31 (1067 aa).

WD repeat units lie at residues 36-75 (GKVV…FRLV), 76-119 (LKTG…SWMR), 120-161 (GHEG…KLNI), 162-201 (RQSV…CKYQ), 202-249 (LPLP…RVIQ), and 250-288 (MPSQ…RFIN). The 176-residue stretch at 419–594 (EYPAKYRMFV…RLFDNIFSNH (176 aa)) folds into the Rab-GAP TBC domain. Residues 724 to 773 (QQELLQKAEEQRKHVLEQEEEKLTQQRAKLAAMKRELKVKELQLLDATRR) adopt a coiled-coil conformation. Basic and acidic residues-rich tracts occupy residues 896–912 (KADA…EELQ) and 926–937 (MREEAHRKKDEA). Disordered regions lie at residues 896 to 955 (KADA…HSDG) and 1045 to 1067 (AARA…PVSP). 2 stretches are compositionally biased toward polar residues: residues 941–953 (IQES…STHS) and 1052–1067 (SSAS…PVSP).

It localises to the cytoplasm. It is found in the cytoskeleton. Its subcellular location is the microtubule organizing center. The protein localises to the centrosome. The protein resides in the centriolar satellite. It localises to the cilium basal body. Its function is as follows. Molecular adapter which is involved in cilium biogenesis. Part of a functional complex including OFD1 a centriolar protein involved in cilium assembly. Could regulate the cAMP-dependent phosphorylation of OFD1, and its subsequent ubiquitination by PJA2 which ultimately leads to its proteasomal degradation. This Oryzias latipes (Japanese rice fish) protein is TBC1 domain family member 31.